The primary structure comprises 361 residues: Oxidoreductase lepF (361 aa).

A helical transmembrane segment spans residues 257–277 (MLMLVLQAVLLPVFYVVAMPL).

This sequence belongs to the NmrA-type oxidoreductase family.

The protein localises to the membrane. In terms of biological role, oxidoreductase; part of the gene cluster 23 that mediates the biosynthesis of a family of 2-pyridones known as leporins. The hybrid PKS-NRPS synthetase lepA and the enoyl reductase lepG are responsible for fusion of phenylalanine with a hexaketide and subsequent release of the stable tetramic acid precursor, pre-leporin C. Because lepA lacks a designated enoylreductase (ER) domain, the required activity is provided the enoyl reductase lepG. It is possible that the dehydrogenase lepF also participates in production of pre-leporin C. Cytochrome P450 monooxygenase lepH is then required for the ring expansion step to yield leporin C. Leporin C is then presumably further oxidized by the N-hydroxylase lepD to form leporin B. LepI may possess a function in biosynthesis upstream of lepA. Leporin B is further oxidized in the presence of ferric ion to give the leporin B trimer-iron chelate, but whether or not this reaction is catalyzed by an enzyme in the pathway or by ferric ion is not determined yet. The protein is Oxidoreductase lepF of Aspergillus flavus (strain ATCC 200026 / FGSC A1120 / IAM 13836 / NRRL 3357 / JCM 12722 / SRRC 167).